Reading from the N-terminus, the 189-residue chain is MVKVIASSVRKGNVLDVDGKLYVVLTAQNFHPGKGTPVTQVDMRRISDGVKVSERYRTTEQVERAFVEDREHTFLYEDGEGFHFMNPETYDQLVMSSEDIGDLKAYLQEGMAVMLSIHEGIAIAIDLPRHVTLEITETEPVVKGQTASSSYKPAVLSNGVRTLVPPHIQAGTRVVIATEDGSYVERAKD.

It belongs to the elongation factor P family.

The protein resides in the cytoplasm. It functions in the pathway protein biosynthesis; polypeptide chain elongation. Involved in peptide bond synthesis. Stimulates efficient translation and peptide-bond synthesis on native or reconstituted 70S ribosomes in vitro. Probably functions indirectly by altering the affinity of the ribosome for aminoacyl-tRNA, thus increasing their reactivity as acceptors for peptidyl transferase. The polypeptide is Elongation factor P (Rhizobium meliloti (strain 1021) (Ensifer meliloti)).